The sequence spans 313 residues: MTLPSNNSTSPVFEFFLICFPSFQSWQHWLSLPLSLLFLLAMGANATLLITIYLEASLHQPLYYLLSLLSLLDIVLCLTVIPKVLAIFWFDLRSISFPACFLQVFIMNSFLTMESCTFMIMAYDRYVAICKPLQYSSIITDQFVARAAIFVVARNGLLTMPIPILSSRLRYCAGHIIKNCICTNVSVSKLSCDDITLNQSYQFVIGWTLLGSDLILIVLSYFFILKTVLRIKGEGDMAKALGTCGSHFILILFFTTVLLVLVITNLARKRIPPDVPILLNILHHLIPPALNPIVYGVRTKEIKQGIQNLLRRL.

Residues 1 to 33 (MTLPSNNSTSPVFEFFLICFPSFQSWQHWLSLP) are Extracellular-facing. Asn6 and Asn7 each carry an N-linked (GlcNAc...) asparagine glycan. A helical transmembrane segment spans residues 34–54 (LSLLFLLAMGANATLLITIYL). The Cytoplasmic segment spans residues 55-67 (EASLHQPLYYLLS). A helical membrane pass occupies residues 68-88 (LLSLLDIVLCLTVIPKVLAIF). At 89 to 100 (WFDLRSISFPAC) the chain is on the extracellular side. Cysteines 100 and 182 form a disulfide. Residues 101 to 121 (FLQVFIMNSFLTMESCTFMIM) traverse the membrane as a helical segment. The Cytoplasmic portion of the chain corresponds to 122-146 (AYDRYVAICKPLQYSSIITDQFVAR). The helical transmembrane segment at 147-167 (AAIFVVARNGLLTMPIPILSS) threads the bilayer. Residues 168-203 (RLRYCAGHIIKNCICTNVSVSKLSCDDITLNQSYQF) are Extracellular-facing. 2 N-linked (GlcNAc...) asparagine glycosylation sites follow: Asn184 and Asn198. The helical transmembrane segment at 204-224 (VIGWTLLGSDLILIVLSYFFI) threads the bilayer. Over 225–246 (LKTVLRIKGEGDMAKALGTCGS) the chain is Cytoplasmic. A helical transmembrane segment spans residues 247-267 (HFILILFFTTVLLVLVITNLA). At 268–276 (RKRIPPDVP) the chain is on the extracellular side. Residues 277-297 (ILLNILHHLIPPALNPIVYGV) traverse the membrane as a helical segment. The Cytoplasmic segment spans residues 298–313 (RTKEIKQGIQNLLRRL).

This sequence belongs to the G-protein coupled receptor 1 family.

Its subcellular location is the cell membrane. Functionally, odorant receptor. This Homo sapiens (Human) protein is Olfactory receptor 56A5 (OR56A5).